The sequence spans 319 residues: 2-dehydropantoate 2-reductase (319 aa).

NADP(+) contacts are provided by residues 10 to 15 and Asn105; that span reads GTGALG. Asn105 is a substrate binding site. The active-site Proton donor is Lys192. Residues Asn196, Asn200, and Ser262 each contribute to the substrate site. Glu274 provides a ligand contact to NADP(+).

It belongs to the ketopantoate reductase family.

It localises to the cytoplasm. It catalyses the reaction (R)-pantoate + NADP(+) = 2-dehydropantoate + NADPH + H(+). The protein operates within cofactor biosynthesis; (R)-pantothenate biosynthesis; (R)-pantoate from 3-methyl-2-oxobutanoate: step 2/2. Functionally, catalyzes the NADPH-dependent reduction of ketopantoate into pantoic acid. This is 2-dehydropantoate 2-reductase from Nostoc sp. (strain PCC 7120 / SAG 25.82 / UTEX 2576).